The primary structure comprises 290 residues: 33 kDa chaperonin (290 aa).

Cystine bridges form between C231–C233 and C263–C266.

This sequence belongs to the HSP33 family. In terms of processing, under oxidizing conditions two disulfide bonds are formed involving the reactive cysteines. Under reducing conditions zinc is bound to the reactive cysteines and the protein is inactive.

Its subcellular location is the cytoplasm. In terms of biological role, redox regulated molecular chaperone. Protects both thermally unfolding and oxidatively damaged proteins from irreversible aggregation. Plays an important role in the bacterial defense system toward oxidative stress. The polypeptide is 33 kDa chaperonin (Thermotoga sp. (strain RQ2)).